The following is a 216-amino-acid chain: Thiopurine S-methyltransferase (216 aa).

4 residues coordinate S-adenosyl-L-methionine: Trp10, Leu45, Glu66, and Arg123.

The protein belongs to the class I-like SAM-binding methyltransferase superfamily. TPMT family.

The protein localises to the cytoplasm. The enzyme catalyses S-adenosyl-L-methionine + a thiopurine = S-adenosyl-L-homocysteine + a thiopurine S-methylether.. The polypeptide is Thiopurine S-methyltransferase (Pseudomonas putida (strain ATCC 47054 / DSM 6125 / CFBP 8728 / NCIMB 11950 / KT2440)).